Consider the following 213-residue polypeptide: 3-isopropylmalate dehydratase small subunit (213 aa).

Belongs to the LeuD family. LeuD type 1 subfamily. Heterodimer of LeuC and LeuD.

The catalysed reaction is (2R,3S)-3-isopropylmalate = (2S)-2-isopropylmalate. Its pathway is amino-acid biosynthesis; L-leucine biosynthesis; L-leucine from 3-methyl-2-oxobutanoate: step 2/4. Functionally, catalyzes the isomerization between 2-isopropylmalate and 3-isopropylmalate, via the formation of 2-isopropylmaleate. The polypeptide is 3-isopropylmalate dehydratase small subunit (Pseudomonas syringae pv. syringae (strain B728a)).